A 225-amino-acid chain; its full sequence is UPF0758 protein Mhun_2739 (225 aa).

Positions 102–225 (RITEPDHILK…VTSLRSLGYL (124 aa)) constitute an MPN domain. Residues histidine 174, histidine 176, and aspartate 187 each coordinate Zn(2+). The JAMM motif motif lies at 174-187 (HNHPSGNPEPSSED).

This sequence belongs to the UPF0758 family.

The sequence is that of UPF0758 protein Mhun_2739 from Methanospirillum hungatei JF-1 (strain ATCC 27890 / DSM 864 / NBRC 100397 / JF-1).